Consider the following 394-residue polypeptide: Elongation factor Tu 1 (394 aa).

Residues 10–204 (KPHVNVGTIG…ALDSYIPEPE (195 aa)) form the tr-type G domain. Residues 19-26 (GHVDHGKT) are G1. Residue 19–26 (GHVDHGKT) coordinates GTP. Residue Thr-26 participates in Mg(2+) binding. Residues 60–64 (GITIN) are G2. The G3 stretch occupies residues 81-84 (DCPG). Residues 81–85 (DCPGH) and 136–139 (NKCD) each bind GTP. The tract at residues 136–139 (NKCD) is G4. The tract at residues 174-176 (SAL) is G5.

The protein belongs to the TRAFAC class translation factor GTPase superfamily. Classic translation factor GTPase family. EF-Tu/EF-1A subfamily. As to quaternary structure, monomer.

Its subcellular location is the cytoplasm. The catalysed reaction is GTP + H2O = GDP + phosphate + H(+). Its function is as follows. GTP hydrolase that promotes the GTP-dependent binding of aminoacyl-tRNA to the A-site of ribosomes during protein biosynthesis. The chain is Elongation factor Tu 1 from Shewanella oneidensis (strain ATCC 700550 / JCM 31522 / CIP 106686 / LMG 19005 / NCIMB 14063 / MR-1).